Reading from the N-terminus, the 111-residue chain is UPF0145 protein RBAM_010660 (111 aa).

Belongs to the UPF0145 family.

This Bacillus velezensis (strain DSM 23117 / BGSC 10A6 / LMG 26770 / FZB42) (Bacillus amyloliquefaciens subsp. plantarum) protein is UPF0145 protein RBAM_010660.